The sequence spans 1200 residues: Metabotropic glycine receptor (1200 aa).

The signal sequence occupies residues 1–24; sequence MGAMAYSLLFCLLLAHLGLGEVGA. The disordered stretch occupies residues 25 to 62; the sequence is SLDPPGRPDSPRERTPRGKQHGQQLPRASAPDPSIPWS. At 25–417 the chain is on the extracellular side; sequence SLDPPGRPDS…CFVQEDKYLR (393 aa). Positions 85–281 are cache-like region; sequence YLYTGDFHQL…CENGSYKPGW (197 aa). 2 N-linked (GlcNAc...) asparagine glycosylation sites follow: N98 and N143. Cysteines 99 and 272 form a disulfide. S172 and R173 together coordinate glycine. A glycan (N-linked (GlcNAc...) asparagine) is linked at N215. The tract at residues 234-253 is disordered; it reads LHRRGSNQGPRGLGHSWRRR. E271 lines the glycine pocket. An N-linked (GlcNAc...) asparagine glycan is attached at N274. Residue D307 coordinates glycine. N333 carries an N-linked (GlcNAc...) asparagine glycan. The chain crosses the membrane as a helical span at residues 418-439; that stretch reads LAIISFQALCMLLDFVSMLVVY. At 440–451 the chain is on the cytoplasmic side; that stretch reads HFRKAKSIRASG. The chain crosses the membrane as a helical span at residues 452–474; that stretch reads LILLETILFGSLLLYFPVVILYF. Residues 475 to 478 are Extracellular-facing; it reads EPST. The helical transmembrane segment at 479-501 threads the bilayer; it reads FRCILLRWARLLGFATVYGTVTL. A disulfide bond links C481 and C573. The Cytoplasmic segment spans residues 502–525; sequence KLHRVLKVFLSRTAQRIPYMTGGR. The helical transmembrane segment at 526–547 threads the bilayer; sequence VMRMLAVIVLVVFWFLVGWTSS. Residues 548 to 576 lie on the Extracellular side of the membrane; sequence MCQNLERDILLVGQGQTSDHLTFNMCLID. A helical membrane pass occupies residues 577–597; that stretch reads RWDYMTAVAEFLFLLWGIYLC. At 598–611 the chain is on the cytoplasmic side; the sequence is YAVRTVPSAFHEPR. Residues 612–633 traverse the membrane as a helical segment; that stretch reads YMAVAVHNELIITAIFHTIRFV. The Extracellular portion of the chain corresponds to 634-642; sequence LASRLQPDW. A helical membrane pass occupies residues 643-664; the sequence is MLMLYFAHAHLTVTVTIGLLLI. At 665–1200 the chain is on the cytoplasmic side; it reads PKFSHSSNNP…SANKIPGPQK (536 aa). S694, S705, and S708 each carry phosphoserine. A disordered region spans residues 757-875; that stretch reads RITEIPETVS…EAESTESVPL (119 aa). 2 stretches are compositionally biased toward basic and acidic residues: residues 769-781 and 819-828; these read CSKE…DHSA and STYDHVRDQT. K774 participates in a covalent cross-link: Glycyl lysine isopeptide (Lys-Gly) (interchain with G-Cter in ubiquitin). Positions 845 to 856 are enriched in low complexity; that stretch reads ENSTLESLSSKK. Residues S865 and S944 each carry the phosphoserine modification. The tract at residues 947-988 is disordered; it reads DNVETIPNSGHMEEPRKPQKSGIMKQQRVSLPTANPDVSSGI. Over residues 973-988 the composition is skewed to polar residues; the sequence is QRVSLPTANPDVSSGI. Positions 1000-1004 match the VCPWE motif 1 motif; it reads VCPWE. S1059 carries the post-translational modification Phosphoserine. The VCPWE motif 2 motif lies at 1065-1069; the sequence is VCPWE. Position 1074 is a phosphoserine (S1074). The tract at residues 1130 to 1160 is disordered; it reads QMGDQEKQTSSSVDIIPGSCNSSNNSHQPLT. The short motif at 1165 to 1169 is the VCPWE motif 3 element; it reads VCPWE. Residues 1177–1200 are disordered; sequence NAERSVTLPASSALSANKIPGPQK. Residues 1178–1191 are compositionally biased toward polar residues; it reads AERSVTLPASSALS.

Belongs to the G-protein coupled receptor 3 family. As to quaternary structure, homodimer. Associates with the RGS7-GNB5 complex, promoting its localization to the cell membrane and regulating its GTPase activator activity. Interacts (via VCPWE motifs) with GNAO1. Interacts with GPC4. Interacts with EGFLAM. In terms of tissue distribution, highly expressed in brain. Expressed in several brain regions including the cerebral cortex, hippocampus, cerebellum and caudate putamen. Only expressed in neurons, and not in microglia, oligodendrocytes or astrocytes. Expressed in the visual center of the cerebral cortex. Also expressed in the eye, including photoreceptors, ganglion cells and trabecular meshwork.

The protein localises to the cell membrane. The protein resides in the postsynaptic cell membrane. It localises to the presynaptic cell membrane. It is found in the nucleus. Metabotropic receptor for glycine that controls synapse formation and function in the brain. Acts as an atypical G-protein coupled receptor that recruits and regulates the RGS7-GNB5 complex instead of activating G proteins. In absence of glycine ligand, promotes the GTPase activator activity of RGS7, increasing the GTPase activity of G protein alpha subunits, thereby driving them into their inactive GDP-bound form. Glycine-binding changes the conformation of the intracellular surface, inhibiting the GTPase activator activity of the RGS7-GNB5 complex, promoting G protein alpha subunits into their active GTP-bound form and regulating cAMP levels. Also able to bind taurine, a compound closely related to glycine, but with a two-fold lower affinity. Glycine receptor-dependent regulation of cAMP controls key ion channels, kinases and neurotrophic factors involved in neuronal excitability and synaptic transmission. Plays a pivotal role in regulating mood and cognition via its ability to regulate neuronal excitability in L2/L3 pyramidal neurons of the prefrontal cortex. Also involved in spatial learning by regulating hippocampal CA1 neuronal excitability. Acts as a synaptic organizer in the hippocampus, required for proper mossy fiber-CA3 neurocircuitry establishment, structure and function: induces presynaptic differentiation in contacting axons via its interaction with GPC4. In addition to glycine, may also act as a receptor for osteocalcin (Bglap or Bglap2) hormone: osteocalcin-binding initiates a signaling response that prevents neuronal apoptosis in the hippocampus and regulates the synthesis of neurotransmitters. The chain is Metabotropic glycine receptor from Mus musculus (Mouse).